The following is a 182-amino-acid chain: Riboflavin kinase (182 aa).

2 residues coordinate Mg(2+): Thr-39 and Asn-41. Glu-117 (nucleophile) is an active-site residue.

This sequence belongs to the flavokinase family. Zn(2+) is required as a cofactor. It depends on Mg(2+) as a cofactor.

It carries out the reaction riboflavin + ATP = FMN + ADP + H(+). Its pathway is cofactor biosynthesis; FMN biosynthesis; FMN from riboflavin (ATP route): step 1/1. Its function is as follows. Catalyzes the phosphorylation of riboflavin (vitamin B2) to form flavin mononucleotide (FMN) coenzyme. The sequence is that of Riboflavin kinase (FMN1) from Lodderomyces elongisporus (strain ATCC 11503 / CBS 2605 / JCM 1781 / NBRC 1676 / NRRL YB-4239) (Yeast).